We begin with the raw amino-acid sequence, 1375 residues long: MGQLTKKFGKIEVTLPIPHLLNLQVDSYKKFLQEGAAALAPDEGLEGVFRSVFPIEDFNRTASLEYVSYEIGEPKYDQAECISKGLTYEAPIRIKVRLVVYDVDEDSENRTIRDIKEQDIYFGTLPLMTEKGTFIINGTERVIVNQLQRSPGIIFEHDAGKTHSSRKVLYSCRVIPMRGSWLDFDYDHKDILYVRIDRRRKMPATILFKAMGMSRSDILEYFYKKEYYTLEDDGRLMWELDKDLYRKDVAYADVADGEGKVIAKAGKPYTKRSWRLMLEAGIPAVEVAPDYIAGMFLAEDIVDEATGEVLAEAADEITLDLIDRLRECSIKRVPVLHTKGSDTSSSIRDTLLLDKTADQEQARVEIYRRLRPSSPPTPEIASTFFENLFRNPDYYDLSPVGRYKLNQRLGLTTTQERVLTDEDILTAIRVLNHLKDTHGPADDIDHLGNRRVRPVGELVENQYRIGLVRMERAIKERMSLQEVSTLMPHDLINPKPVQAVLKEFFGTSQLSQFMDQTNALSEVTHKRRLSALGPGGLTRERAGFEVRDVHTSHYGRICPIETPEGPNIGLIVSLTTYAKVNDFGFIETPYRVVRDGQVTDEVKYLDASSEHGEVVAQANARLDGDHRFVDEFVTTRVRGDVIMSPREEVTLMDISPSQMVSISAALIPFLEHDDANRALMGSNMQRQAVPLLRSTKPIVGTGMEADVARDSGACIIAEADGVVRYADADRIVVSYEGDLYPRTGGVRSYDLQKYHKSNQSSCFGQKPLVSRGQVIRKGDVLADGPGIEDGELALGKNLVVAFMPWCGYNFEDSILISERCVKEDVFTSVHIEEFEVVARDTKLGPEEITRDIPNVGEDMLRNLDGSGIIRIGANVKPDDILVGKITPKGETQLTPEEKLLRAIFGEKARDVKNTSLKVPPGIEGTVIDVKLFNRRSGEKDERTRNIEDYELARLDQKEKDHIRALTETTREKLAPVVVGKQLAYGLAGQKKGEVIAEAGQTLTAEMLEGLPVKKLSGLFKSKDTNEAVQQALESYDRQIEFINAMYESKREKVTEGDDLPPGVIKMAKVHIAVKRKLNVGDKMAGRHGNKGVVSCILPQEDMPFFADGRPVDIVLNPLGVPSRMNIGQIMETHLGWAAKEMGRKLALMLEHGQDLASVREQVKTVFASDAISSEVDNMDDETFVRSVRRLRDGIVTKTPVFDGATEEQIWSWMEQAGLANDGKTELYDGRTGVRFHNRVTTGVMYILKLHHLVDEKIHARSTGPYSLVTQQPLGGKAQFGGQRLGEMEVWALEAYGAAYLLQEFLTVKSDDVTGRVKMYEKVVKGDNFLEAGLPESFNVLVKELMSLGLDVTLHQEEGKKRTKRAGMTFGDGTSY.

Belongs to the RNA polymerase beta chain family. In terms of assembly, the RNAP catalytic core consists of 2 alpha, 1 beta, 1 beta' and 1 omega subunit. When a sigma factor is associated with the core the holoenzyme is formed, which can initiate transcription.

It catalyses the reaction RNA(n) + a ribonucleoside 5'-triphosphate = RNA(n+1) + diphosphate. Functionally, DNA-dependent RNA polymerase catalyzes the transcription of DNA into RNA using the four ribonucleoside triphosphates as substrates. This is DNA-directed RNA polymerase subunit beta from Oleidesulfovibrio alaskensis (strain ATCC BAA-1058 / DSM 17464 / G20) (Desulfovibrio alaskensis).